Here is a 289-residue protein sequence, read N- to C-terminus: Ribosome-inactivating protein alpha-trichosanthin (289 aa).

The signal sequence occupies residues 1-23; it reads MIRFLVLSLLILTLFLTTPAVEG. Glutamate 183 is a catalytic residue. A propeptide spans 271–289 (removed in mature form); it reads AMDDDVPMTQSFGCGSYAI.

It belongs to the ribosome-inactivating protein family. Type 1 RIP subfamily.

The catalysed reaction is Endohydrolysis of the N-glycosidic bond at one specific adenosine on the 28S rRNA.. Inactivates eukaryotic 60S ribosomal subunits. In Trichosanthes kirilowii (Chinese snake gourd), this protein is Ribosome-inactivating protein alpha-trichosanthin.